A 99-amino-acid chain; its full sequence is Large ribosomal subunit protein bL28 (99 aa).

It belongs to the bacterial ribosomal protein bL28 family.

The polypeptide is Large ribosomal subunit protein bL28 (Brucella anthropi (strain ATCC 49188 / DSM 6882 / CCUG 24695 / JCM 21032 / LMG 3331 / NBRC 15819 / NCTC 12168 / Alc 37) (Ochrobactrum anthropi)).